Consider the following 932-residue polypeptide: Chitin synthase regulatory factor 3 (932 aa).

Over residues 1-16 (MKDSHSSRRKYEKEKL) the composition is skewed to basic and acidic residues. Disordered regions lie at residues 1–53 (MKDS…PTSR), 264–356 (TLEE…LQQP), and 374–406 (EVPA…NPTV). Composition is skewed to polar residues over residues 35-53 (SGNT…PTSR), 274-285 (DSITNTVSNASS), and 308-319 (SHFSSTDSNTDS). The segment covering 337 to 349 (KSSETLKNPRNDD) has biased composition (basic and acidic residues). Ser-393 carries the phosphoserine modification. Sel1-like repeat units follow at residues 638–674 (PEAL…KKGH), 675–710 (PLSN…EMDV), 711–747 (VEAM…KSKG), 751–788 (VRAM…VYGY), 789–825 (AAAQ…EQDY), 826–863 (GEAE…CKGL), and 864–899 (AKAQ…KQGF). Residues 905–932 (RLEEQALSSKQTHSKAPKKKQQEQCVVM) form a disordered region.

This is Chitin synthase regulatory factor 3 (chr3) from Schizosaccharomyces pombe (strain 972 / ATCC 24843) (Fission yeast).